A 271-amino-acid polypeptide reads, in one-letter code: MGHMVNAIYQIDEFVNLGANSIETDVSFDDNANPEYTHHGIPCDCGRSCLKWKNYNDFLKGLRSATTPGNSKYQSKLILVVFDLKTGSLYDNQASEAGKKLAKNLLKHYWNNGNNGGRAYIVLSIPDLNHYPLIKGFTDTLKQEGHPELLEKVGYDFSGNDAVGDVAKAYKKAGVSGHVWQSDGITNCLLRGLTRVKEAVANRDSGNGYINKVYYWTVDKRATTRDALDAGVDGVMTNYPDVIADVMSEAAYKNKVRLATYEDSPWVTFKK.

His-3 is a catalytic residue. Glu-23 and Asp-25 together coordinate Mg(2+). The Nucleophile role is filled by His-39. 2 cysteine pairs are disulfide-bonded: Cys-43–Cys-49 and Cys-45–Cys-188. Asp-83 contacts Mg(2+).

It belongs to the arthropod phospholipase D family. Class II subfamily. The cofactor is Mg(2+). In terms of tissue distribution, expressed by the venom gland.

The protein resides in the secreted. The enzyme catalyses an N-(acyl)-sphingosylphosphocholine = an N-(acyl)-sphingosyl-1,3-cyclic phosphate + choline. It carries out the reaction an N-(acyl)-sphingosylphosphoethanolamine = an N-(acyl)-sphingosyl-1,3-cyclic phosphate + ethanolamine. The catalysed reaction is a 1-acyl-sn-glycero-3-phosphocholine = a 1-acyl-sn-glycero-2,3-cyclic phosphate + choline. It catalyses the reaction a 1-acyl-sn-glycero-3-phosphoethanolamine = a 1-acyl-sn-glycero-2,3-cyclic phosphate + ethanolamine. Its function is as follows. Dermonecrotic toxins cleave the phosphodiester linkage between the phosphate and headgroup of certain phospholipids (sphingolipid and lysolipid substrates), forming an alcohol (often choline) and a cyclic phosphate. This toxin acts on sphingomyelin (SM). It may also act on ceramide phosphoethanolamine (CPE), lysophosphatidylcholine (LPC) and lysophosphatidylethanolamine (LPE), but not on lysophosphatidylserine (LPS), and lysophosphatidylglycerol (LPG). It acts by transphosphatidylation, releasing exclusively cyclic phosphate products as second products. Induces dermonecrosis, hemolysis, increased vascular permeability, edema, inflammatory response, and platelet aggregation. This is Dermonecrotic toxin LhSicTox-alphaIA2aiv from Loxosceles hirsuta (Recluse spider).